The sequence spans 225 residues: MTKRYFITGTDTNVGKTLAACALLQAAISIGYHAAGYKPVATGYQLTLDGPRNNDALALLSNSNVILSYSQVNPLVFSEPTSPHIACRAEGRNIELSELSAGLKVIEQKSDWIVVEGAGGWFTPLGEGILYSDWVNYEKLPVILVIGMKLGCINHALLTALAIRQFGLQLVGWIANHIQPTTTWSQHYLAELRNRLDAPLIGDIPWLSNIPVALLAKYINLAELS.

13–18 (NVGKTL) provides a ligand contact to ATP. Residue Thr17 coordinates Mg(2+). Lys38 is an active-site residue. Residue Thr42 participates in substrate binding. Residues Asp55, 116–119 (EGAG), 176–177 (NH), and 205–207 (PWL) each bind ATP. Residues Asp55 and Glu116 each contribute to the Mg(2+) site.

It belongs to the dethiobiotin synthetase family. In terms of assembly, homodimer. Requires Mg(2+) as cofactor.

It is found in the cytoplasm. The catalysed reaction is (7R,8S)-7,8-diammoniononanoate + CO2 + ATP = (4R,5S)-dethiobiotin + ADP + phosphate + 3 H(+). It participates in cofactor biosynthesis; biotin biosynthesis; biotin from 7,8-diaminononanoate: step 1/2. Catalyzes a mechanistically unusual reaction, the ATP-dependent insertion of CO2 between the N7 and N8 nitrogen atoms of 7,8-diaminopelargonic acid (DAPA, also called 7,8-diammoniononanoate) to form a ureido ring. The chain is ATP-dependent dethiobiotin synthetase BioD from Baumannia cicadellinicola subsp. Homalodisca coagulata.